The following is a 301-amino-acid chain: Probable alpha-L-glutamate ligase (301 aa).

The 184-residue stretch at 104-287 (LQLLSRKGVG…IAGMIIEYIE (184 aa)) folds into the ATP-grasp domain. ATP-binding positions include Lys141, 178–179 (EY), Asp187, and 211–213 (RSN). Mg(2+) contacts are provided by Asp248, Glu260, and Asn262. 3 residues coordinate Mn(2+): Asp248, Glu260, and Asn262.

Belongs to the RimK family. Mg(2+) is required as a cofactor. It depends on Mn(2+) as a cofactor.

The polypeptide is Probable alpha-L-glutamate ligase (Photobacterium profundum (strain SS9)).